The sequence spans 569 residues: MIKDFNPGDFIGKKPTKIYAFGGIQEVGKNMYGIEYDDEIIIIDCGIKFASDDLLGINGIIPSFEHLIENQSKVKALFITHGHEDHIGGVPYLLKQVDIPVIYAPRIAASLILKKVNEHKDAKLNKIVTFDDFSEFQTKHFKIDFYRVNHSIPDAFGICVQTPNGNIVQSGDYRFDFAAGSEMLDVHKVVKIAERNVHVFMSESTNAEVPGFSQSEKLIYRNIQKILKEARGRVILTTFASNITRINEIIEIALNNKRKICLLGKSMDVNVNISRKIGLMAIDSNDIVEVRDIKNYPDRNILILCTGSQGEEAAALNTMARGKHNWVSLKSTDTIIMSSNPIPGNYAAVENLLNELSKFGVAIYENSSQLKLHASGHATQQELQLMLNLMFPKYLIPIHGEFKMMRTIKNIANECGIKSEDVALLSNGQVMYLIDEELYYSNEIINADPIYIESHNSSPDLARIIKQRQILSRDGMFAVIVVFDKNNNIIGIPTLITRGCFFALDSNPLMTKIAHSVKRTLESVIQSKKFNSHEQLTKELKRVCKETVSYFIWKNKNRNPLISTVLSWI.

The Zn(2+) site is built by His81, His83, Asp85, His86, His150, and Asp172. 373-377 (HASGH) serves as a coordination point for substrate. His399 contributes to the Zn(2+) binding site.

The protein belongs to the metallo-beta-lactamase superfamily. RNA-metabolizing metallo-beta-lactamase-like family. Bacterial RNase J subfamily. As to quaternary structure, homodimer, may be a subunit of the RNA degradosome. Requires Zn(2+) as cofactor.

It is found in the cytoplasm. Functionally, an RNase that has 5'-3' exonuclease and possibly endoonuclease activity. Involved in maturation of rRNA and in some organisms also mRNA maturation and/or decay. This chain is Ribonuclease J, found in Mycoplasma genitalium (strain ATCC 33530 / DSM 19775 / NCTC 10195 / G37) (Mycoplasmoides genitalium).